Consider the following 336-residue polypeptide: Large ribosomal subunit protein uL10 (336 aa).

Positions 305 to 336 (AVVATEEAPKAETKKEEKKEEAAPAAGLGLLF) are disordered. The span at 311–326 (EAPKAETKKEEKKEEA) shows a compositional bias: basic and acidic residues.

This sequence belongs to the universal ribosomal protein uL10 family. In terms of assembly, part of the 50S ribosomal subunit. Forms part of the ribosomal stalk which helps the ribosome interact with GTP-bound translation factors. Forms a heptameric L10(L12)2(L12)2(L12)2 complex, where L10 forms an elongated spine to which the L12 dimers bind in a sequential fashion.

Its function is as follows. Forms part of the ribosomal stalk, playing a central role in the interaction of the ribosome with GTP-bound translation factors. In Methanococcus vannielii (strain ATCC 35089 / DSM 1224 / JCM 13029 / OCM 148 / SB), this protein is Large ribosomal subunit protein uL10.